Consider the following 122-residue polypeptide: Small ribosomal subunit protein uS13 (122 aa).

The segment at 94 to 122 (KQLPVRGQRTHTNARTRKGKAKPIAGKKK) is disordered.

Belongs to the universal ribosomal protein uS13 family. In terms of assembly, part of the 30S ribosomal subunit. Forms a loose heterodimer with protein S19. Forms two bridges to the 50S subunit in the 70S ribosome.

Functionally, located at the top of the head of the 30S subunit, it contacts several helices of the 16S rRNA. In the 70S ribosome it contacts the 23S rRNA (bridge B1a) and protein L5 of the 50S subunit (bridge B1b), connecting the 2 subunits; these bridges are implicated in subunit movement. Contacts the tRNAs in the A and P-sites. The polypeptide is Small ribosomal subunit protein uS13 (Methylorubrum populi (strain ATCC BAA-705 / NCIMB 13946 / BJ001) (Methylobacterium populi)).